Reading from the N-terminus, the 326-residue chain is Phospho-N-acetylmuramoyl-pentapeptide-transferase (326 aa).

10 consecutive transmembrane segments (helical) span residues 13–33 (ILAP…IFIP), 57–77 (GTPT…ILIM), 85–105 (EMIL…DDIL), 121–141 (MILL…NVGT), 155–175 (NLGI…TNAV), 181–201 (IDGL…IIGF), 208–228 (VAVF…FNAF), 232–252 (IFMG…IALM), 257–277 (LFVI…IIQV), and 305–325 (VKIV…GFVA).

This sequence belongs to the glycosyltransferase 4 family. MraY subfamily. Mg(2+) is required as a cofactor.

The protein resides in the cell membrane. The catalysed reaction is UDP-N-acetyl-alpha-D-muramoyl-L-alanyl-gamma-D-glutamyl-meso-2,6-diaminopimeloyl-D-alanyl-D-alanine + di-trans,octa-cis-undecaprenyl phosphate = di-trans,octa-cis-undecaprenyl diphospho-N-acetyl-alpha-D-muramoyl-L-alanyl-D-glutamyl-meso-2,6-diaminopimeloyl-D-alanyl-D-alanine + UMP. It functions in the pathway cell wall biogenesis; peptidoglycan biosynthesis. Functionally, catalyzes the initial step of the lipid cycle reactions in the biosynthesis of the cell wall peptidoglycan: transfers peptidoglycan precursor phospho-MurNAc-pentapeptide from UDP-MurNAc-pentapeptide onto the lipid carrier undecaprenyl phosphate, yielding undecaprenyl-pyrophosphoryl-MurNAc-pentapeptide, known as lipid I. The polypeptide is Phospho-N-acetylmuramoyl-pentapeptide-transferase (Clostridium beijerinckii (strain ATCC 51743 / NCIMB 8052) (Clostridium acetobutylicum)).